The chain runs to 730 residues: Polyribonucleotide nucleotidyltransferase (730 aa).

Mg(2+)-binding residues include Asp489 and Asp495. Residues 556–615 enclose the KH domain; sequence PKIDTIKVDVDKIKIVIGKGGETIDKIIEETGVKIDIDEDGNIAIYSSDQEAINRTKEII. An S1 motif domain is found at 625–693; it reads GEIYEAEVVR…DKGRIDASMK (69 aa). The interval 691 to 730 is disordered; the sequence is SMKALLPRPPRSEKSNKEDHQSVRHHGSPKDDKGKEKYDK. The span at 700–730 shows a compositional bias: basic and acidic residues; the sequence is PRSEKSNKEDHQSVRHHGSPKDDKGKEKYDK.

This sequence belongs to the polyribonucleotide nucleotidyltransferase family. Mg(2+) is required as a cofactor.

It localises to the cytoplasm. The enzyme catalyses RNA(n+1) + phosphate = RNA(n) + a ribonucleoside 5'-diphosphate. In terms of biological role, involved in mRNA degradation. Catalyzes the phosphorolysis of single-stranded polyribonucleotides processively in the 3'- to 5'-direction. The chain is Polyribonucleotide nucleotidyltransferase from Streptococcus mutans serotype c (strain ATCC 700610 / UA159).